The sequence spans 957 residues: Glycine dehydrogenase (decarboxylating) (957 aa).

An N6-(pyridoxal phosphate)lysine modification is found at Lys-708.

The protein belongs to the GcvP family. As to quaternary structure, the glycine cleavage system is composed of four proteins: P, T, L and H. Requires pyridoxal 5'-phosphate as cofactor.

The catalysed reaction is N(6)-[(R)-lipoyl]-L-lysyl-[glycine-cleavage complex H protein] + glycine + H(+) = N(6)-[(R)-S(8)-aminomethyldihydrolipoyl]-L-lysyl-[glycine-cleavage complex H protein] + CO2. Its function is as follows. The glycine cleavage system catalyzes the degradation of glycine. The P protein binds the alpha-amino group of glycine through its pyridoxal phosphate cofactor; CO(2) is released and the remaining methylamine moiety is then transferred to the lipoamide cofactor of the H protein. In Salmonella typhi, this protein is Glycine dehydrogenase (decarboxylating).